The chain runs to 218 residues: Cytochrome b6 (218 aa).

Residues 35-55 (IFYCLGGITLVCFLIQFATGF) form a helical membrane-spanning segment. C38 lines the heme c pocket. H89 and H103 together coordinate heme b. 3 helical membrane-spanning segments follow: residues 93–113 (ASMM…TGGF), 119–139 (LTWI…VTGY), and 189–209 (LHTF…FLMI). H190 and H205 together coordinate heme b.

The protein belongs to the cytochrome b family. PetB subfamily. In terms of assembly, the 4 large subunits of the cytochrome b6-f complex are cytochrome b6, subunit IV (17 kDa polypeptide, PetD), cytochrome f and the Rieske protein, while the 4 small subunits are PetG, PetL, PetM and PetN. The complex functions as a dimer. The cofactor is heme b. Heme c is required as a cofactor.

The protein resides in the cellular thylakoid membrane. Component of the cytochrome b6-f complex, which mediates electron transfer between photosystem II (PSII) and photosystem I (PSI), cyclic electron flow around PSI, and state transitions. This Prochlorococcus marinus (strain NATL1A) protein is Cytochrome b6.